The chain runs to 644 residues: Protein SNOWY COTYLEDON 3 (644 aa).

Disordered regions lie at residues 1 to 129 (MVAA…TRTE), 162 to 252 (ETAT…DGRL), and 290 to 414 (SDTD…SRVR). A compositionally biased stretch (low complexity) spans 53 to 77 (SPSPSHSTTTTTTTATSTSTSSSSS). Positions 91 to 112 (LSRTTNSASNLVYTPSSLPKRS) are enriched in polar residues. Basic and acidic residues predominate over residues 172–190 (CTPERRRATPVRDQRENSK). 2 stretches are compositionally biased toward polar residues: residues 290 to 302 (SDTDSVSSGSTNG) and 314 to 332 (TRSLPRNGMASTKFWQETN). 2 stretches are compositionally biased toward low complexity: residues 343–370 (SPQCSSPSSRISSISSKFSQSKRFSSDS) and 397–412 (ATATSAPARTSSSPSR). A QWRF motif motif is present at residues 463-466 (QWRF).

Belongs to the QWRF family. As to expression, expressed in young developing tissues, such as seedlings, roots, flowers, buds and young siliques, and to a lesser extent in mature green tissues.

The protein localises to the peroxisome. Probable microtubule-associated peroxisomal protein required for chloroplast biogenesis and for the formation of the prolamellar body and prothylakoids in etioplasts. Not involved in peroxisomal metabolism, including mobilization of storage compounds during germination, fatty acid beta-oxydation or photorespiration. The sequence is that of Protein SNOWY COTYLEDON 3 (SCO3) from Arabidopsis thaliana (Mouse-ear cress).